Consider the following 214-residue polypeptide: Outer-membrane lipoprotein carrier protein (214 aa).

A signal peptide spans 1 to 23; sequence MNKRITVLSLLLATSLSSAAAMA.

Belongs to the LolA family. In terms of assembly, monomer.

Its subcellular location is the periplasm. Its function is as follows. Participates in the translocation of lipoproteins from the inner membrane to the outer membrane. Only forms a complex with a lipoprotein if the residue after the N-terminal Cys is not an aspartate (The Asp acts as a targeting signal to indicate that the lipoprotein should stay in the inner membrane). This chain is Outer-membrane lipoprotein carrier protein, found in Shewanella frigidimarina (strain NCIMB 400).